A 1187-amino-acid polypeptide reads, in one-letter code: Protein CHROMATIN REMODELING 8 (1187 aa).

The interval 1-55 (MEEDEDQFLLSSLGVTSANPEDLEQKILDEATKKPDNDEGGSVEEKSTQLEGTNL) is disordered. Residues 9 to 19 (LLSSLGVTSAN) show a composition bias toward polar residues. A compositionally biased stretch (basic and acidic residues) spans 23–48 (LEQKILDEATKKPDNDEGGSVEEKST). Residues 110–170 (LQHALATDRL…LKRKLKEIRK (61 aa)) are a coiled coil. The Nuclear localization signal 1 signature appears at 162–169 (KRKLKEIR). Disordered regions lie at residues 223 to 247 (GFERRLQQPGPSNSRNLPEGDDENE) and 273 to 343 (DAED…DGRR). Short sequence motifs (nuclear localization signal) lie at residues 290–297 (LRKLYKTP) and 310–317 (GKKSKKTR). Basic residues predominate over residues 305-328 (KKRKAGKKSKKTRPLPEKKWRKRI). The Helicase ATP-binding domain occupies 397 to 594 (WELHCQRAGG…WSLFDFVFPG (198 aa)). An ATP-binding site is contributed by 410-417 (DEMGLGKT). The segment at 467–501 (SAQDSGHGKGQGKASESDYDSESSVDSDHEPKSKN) is disordered. Residues 492 to 501 (DSDHEPKSKN) show a composition bias toward basic and acidic residues. The DEGH box signature appears at 545 to 548 (DEGH). The region spanning 730 to 890 (KVVAEVLKVW…RRFFKARDMK (161 aa)) is the Helicase C-terminal domain. A coiled-coil region spans residues 987 to 1016 (NANDEEEKMRLEHQASQVAQRAAEALRQSR). A compositionally biased stretch (polar residues) spans 1050-1059 (VNSRLTQTGD). The disordered stretch occupies residues 1050–1075 (VNSRLTQTGDKPSAIKNGISAGLSSG).

The protein belongs to the SNF2/RAD54 helicase family. Homodimer. Binds DNA.

It localises to the nucleus. In terms of biological role, essential factor involved in transcription-coupled nucleotide excision repair (TCR) which allows RNA polymerase II-blocking lesions to be rapidly removed from the transcribed strand of active genes. Upon DNA-binding, it locally modifies DNA conformation by wrapping the DNA around itself, thereby modifying the interface between stalled RNA polymerase II and DNA. It is required for transcription-coupled repair complex formation. The polypeptide is Protein CHROMATIN REMODELING 8 (Arabidopsis thaliana (Mouse-ear cress)).